The chain runs to 197 residues: dTTP/UTP pyrophosphatase (197 aa).

D69 (proton acceptor) is an active-site residue.

Belongs to the Maf family. YhdE subfamily. A divalent metal cation serves as cofactor.

The protein localises to the cytoplasm. It catalyses the reaction dTTP + H2O = dTMP + diphosphate + H(+). The catalysed reaction is UTP + H2O = UMP + diphosphate + H(+). Functionally, nucleoside triphosphate pyrophosphatase that hydrolyzes dTTP and UTP. May have a dual role in cell division arrest and in preventing the incorporation of modified nucleotides into cellular nucleic acids. In Lachnoclostridium phytofermentans (strain ATCC 700394 / DSM 18823 / ISDg) (Clostridium phytofermentans), this protein is dTTP/UTP pyrophosphatase.